The chain runs to 1002 residues: ATP-dependent DNA helicase MPH1 (1002 aa).

Residues 108 to 275 (IVRCALFENV…EVVNNLHISK (168 aa)) form the Helicase ATP-binding domain. Residue 121 to 128 (IPTGTGKT) participates in ATP binding. Positions 223-226 (DEAH) match the DEAH box motif. In terms of domain architecture, Helicase C-terminal spans 506–669 (DEETYIRKNK…ALEYTKSDRI (164 aa)). Over residues 531-551 (ENRVEEEKKRQKEQAKLERTG) the composition is skewed to basic and acidic residues. 2 disordered regions span residues 531 to 569 (ENRV…NQKQ) and 799 to 843 (AKSQ…DSHT). Positions 553-568 (RTGSSEEAQLSGMNQK) are enriched in polar residues.

Belongs to the DEAD box helicase family. DEAH subfamily. FANCM sub-subfamily. As to quaternary structure, interacts with the MHF histone-fold complex to form the FANCM-MHF complex.

It localises to the nucleus. It carries out the reaction ATP + H2O = ADP + phosphate + H(+). In terms of biological role, ATP-dependent DNA helicase involved in DNA damage repair by homologous recombination and in genome maintenance. Capable of unwinding D-loops. Plays a role in limiting crossover recombinants during mitotic DNA double-strand break (DSB) repair. Component of a FANCM-MHF complex which promotes gene conversion at blocked replication forks, probably by reversal of the stalled fork. In Kluyveromyces lactis (strain ATCC 8585 / CBS 2359 / DSM 70799 / NBRC 1267 / NRRL Y-1140 / WM37) (Yeast), this protein is ATP-dependent DNA helicase MPH1.